A 262-amino-acid chain; its full sequence is NAD-dependent glucose-6-phosphate dehydrogenase (262 aa).

Residues N90, S115, Y152, and K156 each coordinate NAD(+). The Proton acceptor role is filled by Y152.

This sequence belongs to the NAD(P)-dependent epimerase/dehydratase family. As to quaternary structure, homodimer.

The enzyme catalyses D-glucose 6-phosphate + NAD(+) = 6-phospho-D-glucono-1,5-lactone + NADH + H(+). It functions in the pathway carbohydrate degradation; pentose phosphate pathway. In terms of biological role, catalyzes the NAD-dependent oxidation of glucose 6-phosphate to 6-phosphogluconolactone. In Haloferax volcanii (strain ATCC 29605 / DSM 3757 / JCM 8879 / NBRC 14742 / NCIMB 2012 / VKM B-1768 / DS2) (Halobacterium volcanii), this protein is NAD-dependent glucose-6-phosphate dehydrogenase.